We begin with the raw amino-acid sequence, 305 residues long: DNA-directed RNA polymerase 35 kDa subunit (305 aa).

Belongs to the poxviridae DNA-directed RNA polymerase 35 kDa subunit family. As to quaternary structure, the DNA-dependent RNA polymerase used for intermediate and late genes expression consists of eight subunits 147 kDa, 133 kDa, 35 kDa, 30 kDa, 22 kDa, 19 kDa, 18 kDa and 7 kDa totalling more than 500 kDa in mass. The same holoenzyme, with the addition of the transcription-specificity factor RAP94, is used for early gene expression.

The protein resides in the virion. The enzyme catalyses RNA(n) + a ribonucleoside 5'-triphosphate = RNA(n+1) + diphosphate. In terms of biological role, part of the DNA-dependent RNA polymerase which catalyzes the transcription of viral DNA into RNA using the four ribonucleoside triphosphates as substrates. Responsible for the transcription of early, intermediate and late genes. DNA-dependent RNA polymerase associates with the early transcription factor (ETF) thereby allowing the early genes transcription. Late transcription, and probably also intermediate transcription, require newly synthesized RNA polymerase. This Rabbitpox virus (strain Utrecht) (RPV) protein is DNA-directed RNA polymerase 35 kDa subunit (RPO35).